A 510-amino-acid chain; its full sequence is Aspartate kinase FUB3 (510 aa).

ACT domains follow at residues 372–440 (ILSN…VLPD) and 446–510 (LVGA…KNAI).

It belongs to the aspartokinase family.

It carries out the reaction L-aspartate + ATP = 4-phospho-L-aspartate + ADP. Its pathway is mycotoxin biosynthesis. Functionally, aspartate kinase; part of the gene cluster that mediates the biosynthesis of fusaric acid, a mycotoxin with low to moderate toxicity to animals and humans, but with high phytotoxic properties. L-aspartate is suggested as fusaric acid amino acid precursor that is activated and further processed to O-acetyl-L-homoserine by cluster enzymes aspartate kinase FUB3 and homoserine O-acetyltransferase FUB5, as well as enzymes of the primary metabolism. The polyketide synthase (PKS) FUB1 generates the triketide trans-2-hexenal which is presumptively released by the hydrolase FUB4 and linked to the NRPS-bound amino acid precursor by NAD(P)-dependent dehydrogenase FUB6. FUB1, FUB4, and the non-canonical NRPS Fub8 may form an enzyme complex. Further processing of the NRPS-bound intermediate might be carried out by FUB6 and the sulfhydrylase FUB7, enabling a spontaneous electrocyclization to close the carbon backbone of fusaric acid. Dihydrofusaric acid is likely to be released via reduction by the thioester reductase (TR) domain of FUB8 whereupon the final oxidation to fusaric acid may (also) be performed by the FMN-dependent dehydrogenase FUB9. This is Aspartate kinase FUB3 from Gibberella fujikuroi (strain CBS 195.34 / IMI 58289 / NRRL A-6831) (Bakanae and foot rot disease fungus).